A 376-amino-acid polypeptide reads, in one-letter code: MPARRGDAHIDFARSPRPTIGVEWEFALVDAQTRDLSNEATAVIAEIGENPRVHKELLRNTVEVVSGICRTVPEAMEDLRQTLGPARRIVRDRGMELFCAGAHPFAQWTTQKLTDAPRYAELIKRTQWWGRQMLIWGVHVHVGISSPNKVMPIMTSLLNYYPHLLALSASSPWWTGVDTGYASNRAMMFQQLPTAGLPFQFQTWAEFEGFVYDQKKTGIIDHVDEVRWDIRPSPHLGTLEMRICDGVSNLHELAALVALTHCLVVDLDRRLEADESLPTMPPWHHQENKWRAARYGLDAVIILDADSNERLVTEDLDDVLNRLEPVARKLQCADELAAVADIPRHGASYQRQRRVAEEHDGDLRAVVDALVAELEI.

It belongs to the glutamate--cysteine ligase type 2 family. YbdK subfamily.

It catalyses the reaction L-cysteine + L-glutamate + ATP = gamma-L-glutamyl-L-cysteine + ADP + phosphate + H(+). In terms of biological role, ATP-dependent carboxylate-amine ligase which exhibits weak glutamate--cysteine ligase activity. The chain is Putative glutamate--cysteine ligase 2 from Mycolicibacterium paratuberculosis (strain ATCC BAA-968 / K-10) (Mycobacterium paratuberculosis).